The following is a 131-amino-acid chain: Profilin-1 (131 aa).

The protein belongs to the profilin family. Occurs in many kinds of cells as a complex with monomeric actin in a 1:1 ratio. Cytoplasmic distribution in hypocotyls. In root nodules, it is found in all cells, but is more abundant in the vascular tissue as well as the endodermis.

The protein resides in the cytoplasm. The protein localises to the cytoskeleton. In terms of biological role, binds to actin and affects the structure of the cytoskeleton. At high concentrations, profilin prevents the polymerization of actin, whereas it enhances it at low concentrations. By binding to PIP2, it inhibits the formation of IP3 and DG. The protein is Profilin-1 of Phaseolus vulgaris (Kidney bean).